Reading from the N-terminus, the 327-residue chain is Sugar transporter ERD6-like 9 (327 aa).

8 helical membrane-spanning segments follow: residues 26 to 46 (FLVF…VALG), 68 to 88 (VFGS…ATIA), 102 to 122 (VFCI…WLDL), 125 to 145 (FFVG…IAEI), 152 to 172 (GTFT…AYYL), 180 to 200 (IIAL…FFVP), 260 to 280 (LTIG…GLGY), and 295 to 315 (IGMT…LILV).

This sequence belongs to the major facilitator superfamily. Sugar transporter (TC 2.A.1.1) family.

Its subcellular location is the membrane. Its function is as follows. Sugar transporter. The sequence is that of Sugar transporter ERD6-like 9 from Arabidopsis thaliana (Mouse-ear cress).